Here is a 543-residue protein sequence, read N- to C-terminus: ADIPOR-like receptor IZH3 (543 aa).

Residues 1–259 (MMDSSSKSLT…NWYGWHNETS (259 aa)) are Lumenal-facing. Residues Asn-45, Asn-123, Asn-153, and Asn-256 are each glycosylated (N-linked (GlcNAc...) asparagine). Residues 260–280 (NIWSHLLGAIYIIYLAIYDFP) form a helical membrane-spanning segment. Residues 281 to 295 (QSEVWRNSQVPPQAR) are Cytoplasmic-facing. A helical transmembrane segment spans residues 296 to 316 (WIVFMFLAAALKCMLSSVFWH). Over 317–330 (TFNGTSFLKLRSKF) the chain is Lumenal. The N-linked (GlcNAc...) asparagine glycan is linked to Asn-319. The chain crosses the membrane as a helical span at residues 331-353 (ACVDYSGITILITASILTTEFVT). Over 354–357 (MYSC) the chain is Cytoplasmic. The helical transmembrane segment at 358–378 (YWAMYTYMSISLALGVFGVFM) threads the bilayer. Residues 379–395 (NWSPRFDRPEARPLRIR) are Lumenal-facing. A helical transmembrane segment spans residues 396–416 (FFILLATMGVLSFLHLIFLTD). The Cytoplasmic segment spans residues 417–425 (LHYAATLFS). Residues 426-446 (PVTYKSVVWYLVGVVFYGSFI) form a helical membrane-spanning segment. Residues 447–505 (PERFRSDVQVDKTIPTNYELSTDLEIITKQREIHFREVPTAHSKCSSCPSHAKSFKSLW) lie on the Lumenal side of the membrane. A helical membrane pass occupies residues 506–526 (WVDYFGCSHTFWHFFVVLGVI). Over 527 to 543 (GHYRAILDMFAKRWILS) the chain is Cytoplasmic.

Belongs to the ADIPOR family.

It is found in the endoplasmic reticulum membrane. Its function is as follows. ADIPOR-like receptor involved in zinc metabolism either by altering membrane sterol content or by directly altering cellular zinc levels. The chain is ADIPOR-like receptor IZH3 (IZH3) from Saccharomyces cerevisiae (strain ATCC 204508 / S288c) (Baker's yeast).